A 182-amino-acid polypeptide reads, in one-letter code: Crossover junction endodeoxyribonuclease RuvC (182 aa).

Catalysis depends on residues Asp-7, Glu-69, and Asp-141. Residues Asp-7, Glu-69, and Asp-141 each coordinate Mg(2+).

The protein belongs to the RuvC family. In terms of assembly, homodimer which binds Holliday junction (HJ) DNA. The HJ becomes 2-fold symmetrical on binding to RuvC with unstacked arms; it has a different conformation from HJ DNA in complex with RuvA. In the full resolvosome a probable DNA-RuvA(4)-RuvB(12)-RuvC(2) complex forms which resolves the HJ. Mg(2+) serves as cofactor.

The protein resides in the cytoplasm. It carries out the reaction Endonucleolytic cleavage at a junction such as a reciprocal single-stranded crossover between two homologous DNA duplexes (Holliday junction).. Its function is as follows. The RuvA-RuvB-RuvC complex processes Holliday junction (HJ) DNA during genetic recombination and DNA repair. Endonuclease that resolves HJ intermediates. Cleaves cruciform DNA by making single-stranded nicks across the HJ at symmetrical positions within the homologous arms, yielding a 5'-phosphate and a 3'-hydroxyl group; requires a central core of homology in the junction. The consensus cleavage sequence is 5'-(A/T)TT(C/G)-3'. Cleavage occurs on the 3'-side of the TT dinucleotide at the point of strand exchange. HJ branch migration catalyzed by RuvA-RuvB allows RuvC to scan DNA until it finds its consensus sequence, where it cleaves and resolves the cruciform DNA. This is Crossover junction endodeoxyribonuclease RuvC from Paracidovorax citrulli (strain AAC00-1) (Acidovorax citrulli).